Consider the following 506-residue polypeptide: Maturase K (506 aa).

It belongs to the intron maturase 2 family. MatK subfamily.

It localises to the plastid. The protein resides in the chloroplast. Its function is as follows. Usually encoded in the trnK tRNA gene intron. Probably assists in splicing its own and other chloroplast group II introns. In Mimosa pudica (Sensitive plant), this protein is Maturase K.